Consider the following 200-residue polypeptide: Imidazole glycerol phosphate synthase subunit HisH (200 aa).

The Glutamine amidotransferase type-1 domain maps to 3 to 200; it reads DLALIDAGGA…LRNFLEMSFP (198 aa). Cys-78 acts as the Nucleophile in catalysis. Active-site residues include His-179 and Glu-181.

In terms of assembly, heterodimer of HisH and HisF.

It is found in the cytoplasm. It carries out the reaction 5-[(5-phospho-1-deoxy-D-ribulos-1-ylimino)methylamino]-1-(5-phospho-beta-D-ribosyl)imidazole-4-carboxamide + L-glutamine = D-erythro-1-(imidazol-4-yl)glycerol 3-phosphate + 5-amino-1-(5-phospho-beta-D-ribosyl)imidazole-4-carboxamide + L-glutamate + H(+). It catalyses the reaction L-glutamine + H2O = L-glutamate + NH4(+). It functions in the pathway amino-acid biosynthesis; L-histidine biosynthesis; L-histidine from 5-phospho-alpha-D-ribose 1-diphosphate: step 5/9. IGPS catalyzes the conversion of PRFAR and glutamine to IGP, AICAR and glutamate. The HisH subunit catalyzes the hydrolysis of glutamine to glutamate and ammonia as part of the synthesis of IGP and AICAR. The resulting ammonia molecule is channeled to the active site of HisF. The sequence is that of Imidazole glycerol phosphate synthase subunit HisH from Xanthomonas campestris pv. campestris (strain 8004).